The primary structure comprises 651 residues: Endoplasmic reticulum chaperone BiP (651 aa).

Positions 1–20 are cleaved as a signal peptide; that stretch reads MGLSTYVGIFLLCILTLSRC. ATP-binding positions include 36 to 39, K96, 226 to 228, 292 to 299, and 363 to 366; these read GTTY, GGT, EKAKRTLS, and GSTR. The segment at 125 to 279 is nucleotide-binding (NBD); that stretch reads KPYMKVQVGS…KKKEGKDITK (155 aa). The segment at 399-499 is substrate-binding (SBD); it reads VQAGVISGVE…PRGLPQIEVT (101 aa). Positions 648 to 651 match the Prevents secretion from ER motif; the sequence is KEEL.

Belongs to the heat shock protein 70 family.

It localises to the endoplasmic reticulum lumen. The catalysed reaction is ATP + H2O = ADP + phosphate + H(+). The chaperone activity is regulated by ATP-induced allosteric coupling of the nucleotide-binding (NBD) and substrate-binding (SBD) domains. In the ADP-bound and nucleotide-free (apo) states, the two domains have little interaction. In contrast, in the ATP-bound state the two domains are tightly coupled, which results in drastically accelerated kinetics in both binding and release of polypeptide substrates. J domain-containing co-chaperones stimulate the ATPase activity and are required for efficient substrate recognition. In terms of biological role, endoplasmic reticulum chaperone that plays a key role in protein folding and quality control in the endoplasmic reticulum lumen. Involved in the correct folding of proteins and degradation of misfolded proteins. Acts as a key repressor of the unfolded protein response (UPR). The polypeptide is Endoplasmic reticulum chaperone BiP (Echinococcus granulosus (Hydatid tapeworm)).